The primary structure comprises 349 residues: Acyl-CoA Delta(11) desaturase (349 aa).

The next 2 helical transmembrane spans lie at Phe41–Ser61 and Thr66–His86. The Histidine box-1 signature appears at His86 to His91. The Histidine box-2 signature appears at His123–His127. The helical transmembrane segment at Ala184 to Trp204 threads the bilayer. Positions His263–His267 match the Histidine box-3 motif. Residues Phe282–Leu302 form a helical membrane-spanning segment.

It belongs to the fatty acid desaturase type 1 family. It depends on Fe cation as a cofactor. Adult female pheromone gland. Increases by two or three orders of magnitude during the first 2 days after adult eclosion.

It localises to the endoplasmic reticulum membrane. The enzyme catalyses an 11,12-saturated fatty acyl-CoA + 2 Fe(II)-[cytochrome b5] + O2 + 2 H(+) = an (11Z)-Delta(11)-fatty acyl-CoA + 2 Fe(III)-[cytochrome b5] + 2 H2O. Catalyzes the formation of Delta(11) fatty acyl precursors in the pheromone gland. The chain is Acyl-CoA Delta(11) desaturase (D11DS) from Trichoplusia ni (Cabbage looper).